The primary structure comprises 292 residues: GTP cyclohydrolase FolE2 (292 aa).

This sequence belongs to the GTP cyclohydrolase IV family.

It catalyses the reaction GTP + H2O = 7,8-dihydroneopterin 3'-triphosphate + formate + H(+). It functions in the pathway cofactor biosynthesis; 7,8-dihydroneopterin triphosphate biosynthesis; 7,8-dihydroneopterin triphosphate from GTP: step 1/1. In terms of biological role, converts GTP to 7,8-dihydroneopterin triphosphate. The chain is GTP cyclohydrolase FolE2 from Staphylococcus aureus (strain MRSA252).